The chain runs to 203 residues: Ribonuclease HII (203 aa).

The RNase H type-2 domain occupies 14-203 (GVIAGVDEVG…ILNSTKRALL (190 aa)). Positions 20, 21, and 112 each coordinate a divalent metal cation.

Belongs to the RNase HII family. It depends on Mn(2+) as a cofactor. Mg(2+) is required as a cofactor.

It is found in the cytoplasm. The catalysed reaction is Endonucleolytic cleavage to 5'-phosphomonoester.. Endonuclease that specifically degrades the RNA of RNA-DNA hybrids. The chain is Ribonuclease HII from Wolbachia sp. subsp. Brugia malayi (strain TRS).